The sequence spans 336 residues: Coproporphyrin III ferrochelatase (336 aa).

Residues serine 52 and tyrosine 116 each contribute to the Fe-coproporphyrin III site. Histidine 172 and glutamate 255 together coordinate Fe(2+).

Belongs to the ferrochelatase family.

It is found in the cytoplasm. The catalysed reaction is Fe-coproporphyrin III + 2 H(+) = coproporphyrin III + Fe(2+). It participates in porphyrin-containing compound metabolism; protoheme biosynthesis. Its function is as follows. Involved in coproporphyrin-dependent heme b biosynthesis. Catalyzes the insertion of ferrous iron into coproporphyrin III to form Fe-coproporphyrin III. This chain is Coproporphyrin III ferrochelatase, found in Mycobacterium avium (strain 104).